The primary structure comprises 329 residues: Mitochondrial substrate carrier family protein Q (329 aa).

Solcar repeat units follow at residues 18 to 115 (VEAL…LKSI), 125 to 206 (LGTI…LRAL), and 216 to 310 (LGGL…VVIH). 6 helical membrane passes run 21-41 (LGHAISGGVAGMAAIALTYPF), 95-115 (LIGIGASSFVYYYWYTLLKSI), 131-151 (LAIAALAGCANVLTTLPIWVV), 175-195 (GFGGLYKGLIPALILVSNPSV), 221-241 (VFILGAIAKLIAGIVTYPYLL), and 298-318 (AFMFLVKDKVVIHAVAILFYL).

This sequence belongs to the mitochondrial carrier (TC 2.A.29) family.

Its subcellular location is the peroxisome membrane. Functionally, may have transport activity. The polypeptide is Mitochondrial substrate carrier family protein Q (mcfQ) (Dictyostelium discoideum (Social amoeba)).